A 205-amino-acid polypeptide reads, in one-letter code: ATP synthase subunit b (205 aa).

The chain crosses the membrane as a helical span at residues 45 to 65 (LGMTATAWVSLAMVIVILLLL).

It belongs to the ATPase B chain family. F-type ATPases have 2 components, F(1) - the catalytic core - and F(0) - the membrane proton channel. F(1) has five subunits: alpha(3), beta(3), gamma(1), delta(1), epsilon(1). F(0) has three main subunits: a(1), b(2) and c(10-14). The alpha and beta chains form an alternating ring which encloses part of the gamma chain. F(1) is attached to F(0) by a central stalk formed by the gamma and epsilon chains, while a peripheral stalk is formed by the delta and b chains.

The protein localises to the cell inner membrane. Its function is as follows. F(1)F(0) ATP synthase produces ATP from ADP in the presence of a proton or sodium gradient. F-type ATPases consist of two structural domains, F(1) containing the extramembraneous catalytic core and F(0) containing the membrane proton channel, linked together by a central stalk and a peripheral stalk. During catalysis, ATP synthesis in the catalytic domain of F(1) is coupled via a rotary mechanism of the central stalk subunits to proton translocation. In terms of biological role, component of the F(0) channel, it forms part of the peripheral stalk, linking F(1) to F(0). The polypeptide is ATP synthase subunit b (Rhizorhabdus wittichii (strain DSM 6014 / CCUG 31198 / JCM 15750 / NBRC 105917 / EY 4224 / RW1) (Sphingomonas wittichii)).